The primary structure comprises 82 residues: uncharacterized protein (82 aa).

Helical transmembrane passes span 8-28 (LTTA…LPAP) and 50-70 (LYTL…YFVL).

The protein resides in the cell membrane. This is an uncharacterized protein from Escherichia coli (strain K12).